Here is a 206-residue protein sequence, read N- to C-terminus: Ribosomal RNA small subunit methyltransferase G (206 aa).

Residues Gly-74, Leu-79, 125-126, and Arg-140 contribute to the S-adenosyl-L-methionine site; that span reads VE.

Belongs to the methyltransferase superfamily. RNA methyltransferase RsmG family.

The protein resides in the cytoplasm. The enzyme catalyses guanosine(527) in 16S rRNA + S-adenosyl-L-methionine = N(7)-methylguanosine(527) in 16S rRNA + S-adenosyl-L-homocysteine. In terms of biological role, specifically methylates the N7 position of guanine in position 527 of 16S rRNA. The protein is Ribosomal RNA small subunit methyltransferase G of Shewanella sp. (strain MR-7).